Consider the following 340-residue polypeptide: Phospho-N-acetylmuramoyl-pentapeptide-transferase (340 aa).

10 consecutive transmembrane segments (helical) span residues 5–25 (FILSFFTSLLLMLIFGPHLIN), 50–70 (TPTMGGILIIFSIIISTIIWT), 73–93 (SNPYVWLTLTILIGYGIIGFI), 113–133 (FSLLSILACIIIFLIYYIIND), 147–167 (IIFNTKMICILISYFAIIGTS), 178–198 (GLAIVPIIFVTTNLSIISFIS), 218–238 (LTIICAAIIGSSLGFLWFNTY), 242–262 (IFMGDVGSLSLGGTIGIISVL), 267–287 (ILLIIVGGLFVIETLSVIIQV), and 318–338 (IIRFWIISFILMLLGLLMLKV).

The protein belongs to the glycosyltransferase 4 family. MraY subfamily. Requires Mg(2+) as cofactor.

It is found in the cell membrane. The catalysed reaction is UDP-N-acetyl-alpha-D-muramoyl-L-alanyl-gamma-D-glutamyl-meso-2,6-diaminopimeloyl-D-alanyl-D-alanine + di-trans,octa-cis-undecaprenyl phosphate = di-trans,octa-cis-undecaprenyl diphospho-N-acetyl-alpha-D-muramoyl-L-alanyl-D-glutamyl-meso-2,6-diaminopimeloyl-D-alanyl-D-alanine + UMP. The protein operates within cell wall biogenesis; peptidoglycan biosynthesis. In terms of biological role, catalyzes the initial step of the lipid cycle reactions in the biosynthesis of the cell wall peptidoglycan: transfers peptidoglycan precursor phospho-MurNAc-pentapeptide from UDP-MurNAc-pentapeptide onto the lipid carrier undecaprenyl phosphate, yielding undecaprenyl-pyrophosphoryl-MurNAc-pentapeptide, known as lipid I. This Buchnera aphidicola subsp. Baizongia pistaciae (strain Bp) protein is Phospho-N-acetylmuramoyl-pentapeptide-transferase.